A 629-amino-acid chain; its full sequence is tRNA uridine 5-carboxymethylaminomethyl modification enzyme MnmG (629 aa).

Residue 13–18 (GGGHAG) coordinates FAD. Position 273-287 (273-287 (GPRYCPSIEDKIHRF)) interacts with NAD(+).

This sequence belongs to the MnmG family. Homodimer. Heterotetramer of two MnmE and two MnmG subunits. It depends on FAD as a cofactor.

It is found in the cytoplasm. Functionally, NAD-binding protein involved in the addition of a carboxymethylaminomethyl (cmnm) group at the wobble position (U34) of certain tRNAs, forming tRNA-cmnm(5)s(2)U34. This is tRNA uridine 5-carboxymethylaminomethyl modification enzyme MnmG from Shewanella baltica (strain OS155 / ATCC BAA-1091).